A 1180-amino-acid chain; its full sequence is uncharacterized protein (1180 aa).

7 disordered regions span residues 229 to 280 (RQQG…DTSI), 431 to 465 (KQPP…PPLK), 484 to 575 (SRDT…PNMR), 730 to 758 (GRPL…ASRT), 810 to 986 (GKAE…ASWD), 1045 to 1109 (RLQE…ELEM), and 1125 to 1152 (ERLE…QKEE). Over residues 269–279 (QEDETQAEDTS) the composition is skewed to acidic residues. A compositionally biased stretch (basic residues) spans 431–443 (KQPPKEKAHRRGA). The segment covering 486–497 (DTLSPQGSSSLP) has biased composition (polar residues). The segment covering 509–518 (SKARHTRVHS) has biased composition (basic residues). Basic and acidic residues-rich tracts occupy residues 730–745 (GRPL…DPEP), 826–837 (SHERDLINEAKR), and 846–856 (TKGPKSEREGK). Basic residues predominate over residues 872 to 889 (KAKKKLEKKTRPQRKRTQ). Residues 937 to 959 (QESQVSLDGRSSPSQIATVTGNM) show a composition bias toward polar residues. 3 stretches are compositionally biased toward basic and acidic residues: residues 960–986 (ESKE…ASWD), 1045–1106 (RLQE…RQEE), and 1127–1152 (LEYQ…QKEE). Positions 988–1171 (LRAERAEMRW…ATKQAQEQAR (184 aa)) form a coiled coil.

This is an uncharacterized protein from Homo sapiens (Human).